The primary structure comprises 479 residues: Ribosomal RNA small subunit methyltransferase F (479 aa).

S-adenosyl-L-methionine is bound by residues 125 to 131 (AAAPGSK), Glu-149, Asp-176, and Asp-194. Cys-247 acts as the Nucleophile in catalysis.

The protein belongs to the class I-like SAM-binding methyltransferase superfamily. RsmB/NOP family.

Its subcellular location is the cytoplasm. The enzyme catalyses cytidine(1407) in 16S rRNA + S-adenosyl-L-methionine = 5-methylcytidine(1407) in 16S rRNA + S-adenosyl-L-homocysteine + H(+). Specifically methylates the cytosine at position 1407 (m5C1407) of 16S rRNA. The sequence is that of Ribosomal RNA small subunit methyltransferase F from Escherichia coli (strain ATCC 8739 / DSM 1576 / NBRC 3972 / NCIMB 8545 / WDCM 00012 / Crooks).